The sequence spans 237 residues: Urease subunit alpha (237 aa).

Positions 1–102 are urease gamma; the sequence is MKLTPKELDK…LVTIHTPVED (102 aa). The interval 103 to 237 is urease beta; it reads NGKLAPGEVF…CGCEATKDKQ (135 aa).

In the N-terminal section; belongs to the urease gamma subunit family. This sequence in the C-terminal section; belongs to the urease beta subunit family. In terms of assembly, heterohexamer of 3 UreA (alpha) and 3 UreB (beta) subunits.

The protein localises to the cytoplasm. The enzyme catalyses urea + 2 H2O + H(+) = hydrogencarbonate + 2 NH4(+). Its pathway is nitrogen metabolism; urea degradation; CO(2) and NH(3) from urea (urease route): step 1/1. This chain is Urease subunit alpha, found in Helicobacter felis.